The following is a 338-amino-acid chain: Ketol-acid reductoisomerase (NADP(+)) (338 aa).

Residues methionine 1–threonine 181 enclose the KARI N-terminal Rossmann domain. NADP(+) is bound by residues tyrosine 24–glutamine 27, arginine 47, and serine 52. Histidine 107 is a catalytic residue. Residue glycine 133 coordinates NADP(+). In terms of domain architecture, KARI C-terminal knotted spans asparagine 182–isoleucine 327. Mg(2+)-binding residues include aspartate 190, glutamate 194, glutamate 226, and glutamate 230. Serine 251 is a substrate binding site.

This sequence belongs to the ketol-acid reductoisomerase family. The cofactor is Mg(2+).

It catalyses the reaction (2R)-2,3-dihydroxy-3-methylbutanoate + NADP(+) = (2S)-2-acetolactate + NADPH + H(+). The catalysed reaction is (2R,3R)-2,3-dihydroxy-3-methylpentanoate + NADP(+) = (S)-2-ethyl-2-hydroxy-3-oxobutanoate + NADPH + H(+). It participates in amino-acid biosynthesis; L-isoleucine biosynthesis; L-isoleucine from 2-oxobutanoate: step 2/4. Its pathway is amino-acid biosynthesis; L-valine biosynthesis; L-valine from pyruvate: step 2/4. In terms of biological role, involved in the biosynthesis of branched-chain amino acids (BCAA). Catalyzes an alkyl-migration followed by a ketol-acid reduction of (S)-2-acetolactate (S2AL) to yield (R)-2,3-dihydroxy-isovalerate. In the isomerase reaction, S2AL is rearranged via a Mg-dependent methyl migration to produce 3-hydroxy-3-methyl-2-ketobutyrate (HMKB). In the reductase reaction, this 2-ketoacid undergoes a metal-dependent reduction by NADPH to yield (R)-2,3-dihydroxy-isovalerate. This Burkholderia multivorans (strain ATCC 17616 / 249) protein is Ketol-acid reductoisomerase (NADP(+)).